The sequence spans 572 residues: NADP-dependent malic enzyme (572 aa).

Residue M1 is modified to N-acetylmethionine. Y102 (proton donor) is an active-site residue. R155 lines the NADP(+) pocket. K173 serves as the catalytic Proton acceptor. E245, D246, and D269 together coordinate a divalent metal cation. Residues D269 and 301–318 (GAGEAALGIAHLVVMAME) contribute to the NADP(+) site. The residue at position 336 (S336) is a Phosphoserine.

This sequence belongs to the malic enzymes family. In terms of assembly, homotetramer. It depends on Mg(2+) as a cofactor. Requires Mn(2+) as cofactor.

It is found in the cytoplasm. The catalysed reaction is (S)-malate + NADP(+) = pyruvate + CO2 + NADPH. The enzyme catalyses oxaloacetate + H(+) = pyruvate + CO2. Functionally, catalyzes the oxidative decarboxylation of (S)-malate in the presence of NADP(+) and divalent metal ions, and decarboxylation of oxaloacetate. This Mus musculus (Mouse) protein is NADP-dependent malic enzyme (Me1).